Consider the following 536-residue polypeptide: Pre-mRNA-splicing factor SLU7 (536 aa).

Residues 22–42 form a disordered region; the sequence is EARKAGLAPAEVDEDGKEINP. The CCHC-type zinc finger occupies 94-111; sequence GACENCGAMTHDKKSCME. Residues 178–201 are disordered; sequence KLEEKDGEEGDENVASEEEDEEDG. A compositionally biased stretch (acidic residues) spans 182 to 200; it reads KDGEEGDENVASEEEDEED.

This sequence belongs to the SLU7 family.

It is found in the nucleus. Participates in the second catalytic step of pre-mRNA splicing, when the free hydroxyl group of exon I attacks the 3'-splice site to generate spliced mRNA and the excised lariat intron. This chain is Pre-mRNA-splicing factor SLU7, found in Oryza sativa subsp. indica (Rice).